The chain runs to 426 residues: Histidine--tRNA ligase (426 aa).

The protein belongs to the class-II aminoacyl-tRNA synthetase family. Homodimer.

The protein localises to the cytoplasm. The catalysed reaction is tRNA(His) + L-histidine + ATP = L-histidyl-tRNA(His) + AMP + diphosphate + H(+). The sequence is that of Histidine--tRNA ligase from Pseudoalteromonas atlantica (strain T6c / ATCC BAA-1087).